The primary structure comprises 312 residues: Porphobilinogen deaminase (312 aa).

At cysteine 243 the chain carries S-(dipyrrolylmethanemethyl)cysteine.

Belongs to the HMBS family. In terms of assembly, monomer. The cofactor is dipyrromethane.

It carries out the reaction 4 porphobilinogen + H2O = hydroxymethylbilane + 4 NH4(+). It participates in porphyrin-containing compound metabolism; protoporphyrin-IX biosynthesis; coproporphyrinogen-III from 5-aminolevulinate: step 2/4. Functionally, tetrapolymerization of the monopyrrole PBG into the hydroxymethylbilane pre-uroporphyrinogen in several discrete steps. The polypeptide is Porphobilinogen deaminase (Vibrio parahaemolyticus serotype O3:K6 (strain RIMD 2210633)).